Reading from the N-terminus, the 385-residue chain is ELAV-like protein 4 (385 aa).

The segment at 12–48 (TMEPQVSNGPTSNTSNGPSSNNRNCPSPMQTGAATDD) is disordered. A compositionally biased stretch (low complexity) spans 18-33 (SNGPTSNTSNGPSSNN). Over residues 34–44 (RNCPSPMQTGA) the composition is skewed to polar residues. S38 carries the post-translational modification Phosphoserine. 2 RRM domains span residues 51 to 129 (TNLI…YARP) and 137 to 217 (ANLY…FANN). Phosphoserine is present on S233. R248 is subject to Asymmetric dimethylarginine; by CARM1; alternate. R248 carries the omega-N-methylarginine; by CARM1; alternate modification. Positions 302–380 (WCIFVYNLSP…RVLQVSFKTN (79 aa)) constitute an RRM 3 domain.

It belongs to the RRM elav family. As to quaternary structure, component of a TAU mRNP complex, at least composed of IGF2BP1, ELAVL4 and G3BP. Associates with the EIF4F cap-binding complex, composed of EIF4G, EIF4A, EIF4E and PABP. Within the EIF4F cap-binding complex, interacts with EIF4A. Interacts with SMN (via Tudor domain) in an RNA-independent manner; the interaction is required for localization of ELAVL4 to RNA granules. Interacts with MAP1 light chain LC1 (via C-terminus); the interaction contributes to the association of ELAVL4 with microtubules. Interacts with MAP1 light chain LC2. Post-translationally, methylated by CARM1, which leads to reduced RNA-binding activity and enhanced interaction with SMN. Methylation at Arg-248 by CARM1 weakens protective binding to the 3'UTR of CDKN1A mRNA and down-regulates CDKN1A protein expression, thereby maintaining cells in a proliferative state. Methylation is inhibited by NGF, which facilitates neurite outgrowth. As to expression, expressed in the brain, including the hippocampus, and in pancreatic beta cells (at protein level). Expressed in pyramidal neurons of the hippocampal CA3 and CA1 region and in the hilus but not in dentate granule cells (at protein level). Expressed in the dorsal root ganglion and the spinal cord (at protein level). Expressed in neural stem and progenitor cells (at protein level). Expressed in radial glia-like cells and in transient amplifying cells in the subventricular zone (SVZ), and in immature neurons both in the SVZ and the rostral migratory stream as well as in mature neurons in the olfactory bulb (at protein level). Expressed in testis and in the brain, including the hippocampus, the neocortex and the cerebellum. Expressed in lower- but not upper-layer primary neurons of the mature neocortex, in the hippocampal regions CA1-3 and the dentate gyrus. Expressed in the mitral and granule cells of the olfactory bulb, cerebral cortex, entorhinal cortex, thalamus, medial habenula, amygdala, granule cells of the cerebellum, pons, olivary nucleus, dorsal and ventral spinal cord and in dorsal root ganglia. Expressed in motor neurons. Isoform 4: Expressed in the brain. Isoform 5: Expressed in the brain. Isoform 6: Expressed in the brain. Isoform 7: Expressed in the brain. Isoform 8: Expressed in the brain. Isoform 9: Expressed in the brain. Isoform 10: Expressed in the brain. Isoform 11: Expressed in the brain.

The protein localises to the cytoplasm. Its subcellular location is the perikaryon. The protein resides in the cell projection. It is found in the dendrite. It localises to the axon. The protein localises to the growth cone. RNA-binding protein that is involved in the post-transcriptional regulation of mRNAs. Plays a role in the regulation of mRNA stability, alternative splicing and translation. Binds to AU-rich element (ARE) sequences in the 3' untranslated region (3'UTR) of target mRNAs, including GAP43, VEGF, FOS, CDKN1A and ACHE mRNA. Many of the target mRNAs are coding for RNA-binding proteins, transcription factors and proteins involved in RNA processing and/or neuronal development and function. By binding to the mRNA 3'UTR, decreases mRNA deadenylation and thereby contributes to the stabilization of mRNA molecules and their protection from decay. Also binds to the polyadenylated (poly(A)) tail in the 3'UTR of mRNA, thereby increasing its affinity for mRNA binding. Mainly plays a role in neuron-specific RNA processing by stabilization of mRNAs such as GAP43, ACHE and mRNAs of other neuronal proteins, thereby contributing to the differentiation of neural progenitor cells, nervous system development, learning and memory mechanisms. Involved in the negative regulation of the proliferative activity of neuronal stem cells and in the positive regulation of neuronal differentiation of neural progenitor cells. Promotes neuronal differentiation of neural stem/progenitor cells in the adult subventricular zone of the hippocampus by binding to and stabilizing SATB1 mRNA. Binds and stabilizes MSI1 mRNA in neural stem cells. Exhibits increased binding to ACHE mRNA during neuronal differentiation, thereby stabilizing ACHE mRNA and enhancing its expression. Protects CDKN1A mRNA from decay by binding to its 3'-UTR. May bind to APP and BACE1 mRNAS and the BACE1AS lncRNA and enhance their stabilization. Plays a role in neurite outgrowth and in the establishment and maturation of dendritic arbors, thereby contributing to neocortical and hippocampal circuitry function. Stabilizes GAP43 mRNA and protects it from decay during postembryonic development in the brain. By promoting the stabilization of GAP43 mRNA, plays a role in NGF-mediated neurite outgrowth. Binds to BDNF long 3'UTR mRNA, thereby leading to its stabilization and increased dendritic translation after activation of PKC. By increasing translation of BDNF after nerve injury, may contribute to nerve regeneration. Acts as a stabilizing factor by binding to the 3'UTR of NOVA1 mRNA, thereby increasing its translation and enhancing its functional activity in neuron-specific splicing. Stimulates translation of mRNA in a poly(A)- and cap-dependent manner, possibly by associating with the EIF4F cap-binding complex. May also negatively regulate translation by binding to the 5'UTR of Ins2 mRNA, thereby repressing its translation. Upon glucose stimulation, Ins2 mRNA is released from ELAVL4 and translational inhibition is abolished. Also plays a role in the regulation of alternative splicing. May regulate alternative splicing of CALCA pre-mRNA into Calcitonin and Calcitonin gene-related peptide 1 (CGRP) by competing with splicing regulator TIAR for binding to U-rich sequences of CALCA pre-mRNA. This is ELAV-like protein 4 (Elavl4) from Mus musculus (Mouse).